We begin with the raw amino-acid sequence, 328 residues long: Biotin synthase (328 aa).

Residues 49 to 273 (FNKEKIETCS…ICISRIIMPE (225 aa)) form the Radical SAM core domain. Positions 67, 71, and 74 each coordinate [4Fe-4S] cluster. 4 residues coordinate [2Fe-2S] cluster: serine 110, cysteine 142, cysteine 201, and arginine 277.

The protein belongs to the radical SAM superfamily. Biotin synthase family. As to quaternary structure, homodimer. The cofactor is [4Fe-4S] cluster. [2Fe-2S] cluster is required as a cofactor.

It carries out the reaction (4R,5S)-dethiobiotin + (sulfur carrier)-SH + 2 reduced [2Fe-2S]-[ferredoxin] + 2 S-adenosyl-L-methionine = (sulfur carrier)-H + biotin + 2 5'-deoxyadenosine + 2 L-methionine + 2 oxidized [2Fe-2S]-[ferredoxin]. It participates in cofactor biosynthesis; biotin biosynthesis; biotin from 7,8-diaminononanoate: step 2/2. In terms of biological role, catalyzes the conversion of dethiobiotin (DTB) to biotin by the insertion of a sulfur atom into dethiobiotin via a radical-based mechanism. The protein is Biotin synthase of Methanococcus vannielii (strain ATCC 35089 / DSM 1224 / JCM 13029 / OCM 148 / SB).